Consider the following 146-residue polypeptide: D-aminoacyl-tRNA deacylase (146 aa).

Residues 137 to 138 (GP) carry the Gly-cisPro motif, important for rejection of L-amino acids motif.

The protein belongs to the DTD family. Homodimer.

It is found in the cytoplasm. The catalysed reaction is glycyl-tRNA(Ala) + H2O = tRNA(Ala) + glycine + H(+). The enzyme catalyses a D-aminoacyl-tRNA + H2O = a tRNA + a D-alpha-amino acid + H(+). In terms of biological role, an aminoacyl-tRNA editing enzyme that deacylates mischarged D-aminoacyl-tRNAs. Also deacylates mischarged glycyl-tRNA(Ala), protecting cells against glycine mischarging by AlaRS. Acts via tRNA-based rather than protein-based catalysis; rejects L-amino acids rather than detecting D-amino acids in the active site. By recycling D-aminoacyl-tRNA to D-amino acids and free tRNA molecules, this enzyme counteracts the toxicity associated with the formation of D-aminoacyl-tRNA entities in vivo and helps enforce protein L-homochirality. The polypeptide is D-aminoacyl-tRNA deacylase (Thermodesulfovibrio yellowstonii (strain ATCC 51303 / DSM 11347 / YP87)).